Consider the following 331-residue polypeptide: Biotin synthase (331 aa).

Positions 51–278 (QTIQLSTLMS…KSYVRLSAGR (228 aa)) constitute a Radical SAM core domain. [4Fe-4S] cluster contacts are provided by cysteine 66, cysteine 70, and cysteine 73. Residues cysteine 110, cysteine 141, cysteine 201, and arginine 273 each coordinate [2Fe-2S] cluster.

This sequence belongs to the radical SAM superfamily. Biotin synthase family. Homodimer. [4Fe-4S] cluster is required as a cofactor. [2Fe-2S] cluster serves as cofactor.

It carries out the reaction (4R,5S)-dethiobiotin + (sulfur carrier)-SH + 2 reduced [2Fe-2S]-[ferredoxin] + 2 S-adenosyl-L-methionine = (sulfur carrier)-H + biotin + 2 5'-deoxyadenosine + 2 L-methionine + 2 oxidized [2Fe-2S]-[ferredoxin]. It participates in cofactor biosynthesis; biotin biosynthesis; biotin from 7,8-diaminononanoate: step 2/2. In terms of biological role, catalyzes the conversion of dethiobiotin (DTB) to biotin by the insertion of a sulfur atom into dethiobiotin via a radical-based mechanism. This Histophilus somni (strain 129Pt) (Haemophilus somnus) protein is Biotin synthase.